A 43-amino-acid chain; its full sequence is Protein PsbN (43 aa).

The helical transmembrane segment at 4-24 threads the bilayer; it reads ATIIVIFVSSLLVGITAYSVY.

Belongs to the PsbN family.

It localises to the plastid. The protein localises to the chloroplast thylakoid membrane. In terms of biological role, may play a role in photosystem I and II biogenesis. This is Protein PsbN from Thalassiosira pseudonana (Marine diatom).